The chain runs to 209 residues: MAEVASQETEFAAFAFGSVVERRDELEGRPWISYPVRVVADTPELVAVYLSHGTLLTFGDGPFSWGPHPWGPFGDRWQSAGILQLHRPGRGHSVWVLRDADTGAFREWYVNVEAPWRRTPTGFSTLDHEIDLVVPADSRTLRWKDVEKFEERARIGHFSPEEATAIRTEAADVAREIAAGEQWWDTSWSRWEPPAGWHALLQSFETEGS.

A divalent metal cation-binding residues include Asn111, Asp127, Glu129, and Asp131. Lys144 (proton donor) is an active-site residue. Residue Asp145 participates in a divalent metal cation binding.

The protein belongs to the FomD family. Monomer in solution. Mn(2+) is required as a cofactor. It depends on Co(2+) as a cofactor.

It carries out the reaction cytidine 5'-({hydroxy[(S)-2-hydroxypropyl]phosphonoyl}phosphate) + H2O = (S)-2-hydroxypropylphosphonate + CMP + H(+). It functions in the pathway antibiotic biosynthesis; fosfomycin biosynthesis. With respect to regulation, hydrolysis of (S)-HPP-CMP is inhibited by CDP. Its function is as follows. Involved in fosfomycin biosynthesis. Catalyzes the hydrolysis of cytidylyl (S)-2-hydroxypropylphosphonate ((S)-HPP-CMP) to give (S)-2-hydroxypropylphosphonate ((S)-HPP) and CMP. Can also hydrolyze (R)-HPP-CMP and cytidylyl 2-hydroxyethylphosphonate (HEP-CMP), which is a biosynthetic intermediate before C-methylation, but the catalytic efficiency is much higher with (S)-HPP-CMP. In Streptomyces wedmorensis, this protein is Cytidylyl-2-hydroxypropylphosphonate hydrolase.